A 419-amino-acid chain; its full sequence is UPF0329 protein ECU07_1890/ECU10_0010 (419 aa).

The segment covering 136–165 (RQRKREEETERSVKELVGDEEKAKSKEEKA) has biased composition (basic and acidic residues). The interval 136 to 222 (RQRKREEETE…KGGKKKSKGG (87 aa)) is disordered. Residues 213–222 (KGGKKKSKGG) show a composition bias toward basic residues.

The protein belongs to the UPF0329 family.

This chain is UPF0329 protein ECU07_1890/ECU10_0010, found in Encephalitozoon cuniculi (strain GB-M1) (Microsporidian parasite).